The sequence spans 317 residues: Fruit protein pKIWI502 (317 aa).

Residues 1 to 29 (MSITLSRPSLSRPSLSRHPSLTLHSSLSH) form a disordered region. The FAD-binding FR-type domain occupies 71–182 (YIWTPVPISR…TQIIGRGFDI (112 aa)).

In Actinidia deliciosa (Kiwi), this protein is Fruit protein pKIWI502.